The following is a 411-amino-acid chain: Carbohydrate sulfotransferase 5 (411 aa).

Residues 1–30 are Cytoplasmic-facing; it reads MGMRARVPKVAHSTRRPPAARMWLPRFSSK. The helical; Signal-anchor for type II membrane protein transmembrane segment at 31-48 threads the bilayer; it reads TVTVLLLAQTTCLLLFII. Residues 49–411 lie on the Lumenal side of the membrane; sequence SRPGPSSPAG…PDHFSWASPD (363 aa). Residue 71–77 coordinates 3'-phosphoadenylyl sulfate; sequence WRSGSSF. An N-linked (GlcNAc...) asparagine glycan is attached at asparagine 138. 224–232 contacts 3'-phosphoadenylyl sulfate; it reads RDPRAVLRS. Asparagine 327 and asparagine 350 each carry an N-linked (GlcNAc...) asparagine glycan.

The protein belongs to the sulfotransferase 1 family. Gal/GlcNAc/GalNAc subfamily. Predominantly expressed in small and large intestines and colon. Weakly expressed in lymphocytes. Not expressed in other tissues. Down-regulated in colonic adenocarcinomas.

Its subcellular location is the golgi apparatus membrane. In terms of biological role, sulfotransferase that utilizes 3'-phospho-5'-adenylyl sulfate (PAPS) as sulfonate donor to catalyze the transfer of sulfate to position 6 of non-reducing N-acetylglucosamine (GlcNAc) residues and O-linked sugars of mucin-type acceptors. Acts on the non-reducing terminal GlcNAc of short carbohydrate substrates. However, it does not transfer sulfate to longer carbohydrate substrates that have poly-N-acetyllactosamine structures. Has no activity toward keratan. Not involved in generating HEV-expressed ligands for SELL. Its substrate specificity may be influenced by its subcellular location. The chain is Carbohydrate sulfotransferase 5 (CHST5) from Homo sapiens (Human).